The primary structure comprises 663 residues: Protein MICRORCHIDIA 6 (663 aa).

A disordered region spans residues 1 to 77 (MSHDRSVNVS…PADDAGVTSS (77 aa)). Polar residues predominate over residues 49-62 (SVGQSAGQSSTSVV). A Nuclear localization signal motif is present at residues 552–559 (KRKEHPDS). A coiled-coil region spans residues 614–659 (DRKVRSQNLEVKAMNLRSELENYKSEYERLMVELQALDLVKDEHRR).

It belongs to the MORC ATPase protein family. Homodimer and heterodimers with MORC1/CRT1 and MORC2. Interacts directly with SUVH9. Component of an RNA-directed DNA methylation (RdDM) complex that contains at least MORC6, MORC1/CRT1, MORC2, SWI3D and SUVH9. Stimulated by interaction with DMS3. Interacts with IDN2, SWI3B, SWI3C and SWI3D. Mg(2+) is required as a cofactor. It depends on Mn(2+) as a cofactor.

The protein resides in the nucleus. Its activity is regulated as follows. Stimulated by DMS3. In terms of biological role, involved in RNA-directed DNA methylation (RdDM) as a component of the RdDM machinery and required for gene silencing. Together with SUVH2 and SUVH9, regulates the silencing of some transposable elements (TEs). Exhibits ATPase activity. May also be involved in the regulation of chromatin architecture/condensation to maintain gene silencing. Binds DNA/RNA in a non-specific manner and exhibits endonuclease activity. Probably involved in DNA repair. Positive regulator of defense against the oomycete Hyaloperonospora arabidopsidis (Hpa). The sequence is that of Protein MICRORCHIDIA 6 from Arabidopsis thaliana (Mouse-ear cress).